A 186-amino-acid polypeptide reads, in one-letter code: Large ribosomal subunit protein uL16 (186 aa).

The protein belongs to the universal ribosomal protein uL16 family.

The protein is Large ribosomal subunit protein uL16 of Nanoarchaeum equitans (strain Kin4-M).